The primary structure comprises 1023 residues: RTX-I toxin determinant A from serotypes 1/9 (1023 aa).

The next 3 membrane-spanning stretches (helical) occupy residues 226-256 (NNLPDLSLAGPGFDAVSGILSVVSASFILSN), 297-326 (STTAATGGLIGSVVALAISPLSFLNVADKF), and 367-406 (INSVLSARSAGVGAAATGSLVGAPVAALVSAITGIISGIL). Hemolysin-type calcium-binding repeat units lie at residues 730-747 (FGSRFTDIFHGAKGDDEI), 748-765 (YGNDGHDILYGDDGNDVI), 766-783 (HGGDGNDHLVGGNGNDRL), 784-801 (IGGKGNNFLNGGDGDDEL), 812-829 (LGGAGNDILYGSDGTNLF), and 830-847 (DGGVGNDKIYGGLGKDIY).

This sequence belongs to the RTX prokaryotic toxin (TC 1.C.11) family. Palmitoylated by ApxIC. The toxin only becomes active when modified.

It is found in the secreted. Its subcellular location is the host cell membrane. Functionally, one of the virulence factors of A.pleuropneumoniae, which has a strong hemolytic activity and is cytotoxic for alveolar macrophages and neutrophils. This chain is RTX-I toxin determinant A from serotypes 1/9 (apxIA), found in Actinobacillus pleuropneumoniae (Haemophilus pleuropneumoniae).